Consider the following 874-residue polypeptide: Speckle targeted PIP5K1A-regulated poly(A) polymerase (874 aa).

The Matrin-type zinc finger occupies 16-46; it reads FRCCLCHVTTANRPSLDAHLGGRKHRHLVEL. The RRM domain occupies 56–128; that stretch reads RSVFVSGFPR…HRLRVRPREQ (73 aa). Residues 113–146 form a disordered region; that stretch reads QHSLGGHRLRVRPREQKEFQSPASKSPKGAAPDS. Position 205 (serine 205) interacts with ATP. Mg(2+)-binding residues include aspartate 216 and aspartate 218. 2 residues coordinate UTP: aspartate 216 and aspartate 218. Residues 252–334 form a disordered region; sequence QALACTPASP…ELAETPKEEK (83 aa). A compositionally biased stretch (pro residues) spans 259 to 269; it reads ASPPDSQPPAS. A compositionally biased stretch (polar residues) spans 280–291; that stretch reads TPSSSLAPQTPD. Residue asparagine 392 coordinates ATP. UTP contacts are provided by asparagine 392, arginine 414, tyrosine 432, and histidine 549. In terms of domain architecture, PAP-associated spans 491 to 549; sequence LSSLLAQFFSCVSCWDLRGSLLSLREGQALPVAGGLPSNLWEGLRLGPLNLQDPFDLSH. The interval 598–874 is KA1; binds the bulging loops of U6 snRNA but is dispensable for terminal uridylyltransferase activity; that stretch reads SSPSSLLSAT…FLPQAIRHLK (277 aa). Disordered stretches follow at residues 638–662 and 705–761; these read ATKRTRSEGGGTGESSQGGTSKRLK and MQSP…ASLP. Residue serine 750 is modified to Phosphoserine.

Belongs to the DNA polymerase type-B-like family. In terms of assembly, associates with the cleavage and polyadenylation specificity factor (CPSF) complex. Interacts with CPSF1 and CPSF3; the interaction is direct. Interacts with PIP5K1A. Mg(2+) is required as a cofactor. The cofactor is Mn(2+). In terms of processing, phosphorylated by CK1 in the proline-rich (Pro-rich) region. Widely expressed.

It is found in the nucleus. The protein resides in the nucleolus. It localises to the nucleus speckle. The catalysed reaction is RNA(n) + UTP = RNA(n)-3'-uridine ribonucleotide + diphosphate. The enzyme catalyses RNA(n) + ATP = RNA(n)-3'-adenine ribonucleotide + diphosphate. With respect to regulation, adenylyltransferase activity is specifically phosphatidylinositol 4,5-bisphosphate (PtdIns(4,5)P2). Functionally, poly(A) polymerase that creates the 3'-poly(A) tail of specific pre-mRNAs. Localizes to nuclear speckles together with PIP5K1A and mediates polyadenylation of a select set of mRNAs, such as HMOX1. In addition to polyadenylation, it is also required for the 3'-end cleavage of pre-mRNAs: binds to the 3'UTR of targeted pre-mRNAs and promotes the recruitment and assembly of the CPSF complex on the 3'UTR of pre-mRNAs. In addition to adenylyltransferase activity, also has uridylyltransferase activity. However, the ATP ratio is higher than UTP in cells, suggesting that it functions primarily as a poly(A) polymerase. Acts as a specific terminal uridylyltransferase for U6 snRNA in vitro: responsible for a controlled elongation reaction that results in the restoration of the four 3'-terminal UMP-residues found in newly transcribed U6 snRNA. Not involved in replication-dependent histone mRNA degradation. In Homo sapiens (Human), this protein is Speckle targeted PIP5K1A-regulated poly(A) polymerase (TUT1).